Reading from the N-terminus, the 1243-residue chain is DNA polymerase II large subunit (1243 aa).

The protein belongs to the archaeal DNA polymerase II family. As to quaternary structure, heterodimer of a large subunit and a small subunit.

It carries out the reaction DNA(n) + a 2'-deoxyribonucleoside 5'-triphosphate = DNA(n+1) + diphosphate. The enzyme catalyses Exonucleolytic cleavage in the 3'- to 5'-direction to yield nucleoside 5'-phosphates.. Functionally, possesses two activities: a DNA synthesis (polymerase) and an exonucleolytic activity that degrades single-stranded DNA in the 3'- to 5'-direction. Has a template-primer preference which is characteristic of a replicative DNA polymerase. This Nanoarchaeum equitans (strain Kin4-M) protein is DNA polymerase II large subunit.